Here is a 339-residue protein sequence, read N- to C-terminus: Dihydroorotate dehydrogenase (quinone) (339 aa).

FMN contacts are provided by residues 64 to 68 and T88; that span reads AGADK. K68 serves as a coordination point for substrate. 113–117 serves as a coordination point for substrate; the sequence is NRNGF. Positions 141 and 174 each coordinate FMN. Residue N174 participates in substrate binding. Catalysis depends on S177, which acts as the Nucleophile. N179 provides a ligand contact to substrate. Residues K219 and T247 each coordinate FMN. A substrate-binding site is contributed by 248–249; sequence NT. FMN-binding positions include G270, G299, and 320 to 321; that span reads YS.

This sequence belongs to the dihydroorotate dehydrogenase family. Type 2 subfamily. Monomer. The cofactor is FMN.

The protein localises to the cell membrane. It catalyses the reaction (S)-dihydroorotate + a quinone = orotate + a quinol. The protein operates within pyrimidine metabolism; UMP biosynthesis via de novo pathway; orotate from (S)-dihydroorotate (quinone route): step 1/1. Its function is as follows. Catalyzes the conversion of dihydroorotate to orotate with quinone as electron acceptor. The sequence is that of Dihydroorotate dehydrogenase (quinone) (pyrD) from Haemophilus influenzae (strain ATCC 51907 / DSM 11121 / KW20 / Rd).